Here is a 296-residue protein sequence, read N- to C-terminus: Alpha/beta-gliadin clone PW1215 (296 aa).

The signal sequence occupies residues methionine 1–alanine 20. Disordered regions lie at residues proline 24–glutamine 126 and serine 220–glutamine 255. Positions valine 25–proline 36 are enriched in pro residues. A compositionally biased stretch (low complexity) spans glutamine 37–proline 58. Composition is skewed to pro residues over residues proline 59–serine 71 and phenylalanine 81–glutamine 116. Low complexity-rich tracts occupy residues glutamine 117 to glutamine 126 and serine 220 to proline 241. Positions serine 242–glutamine 255 are enriched in polar residues.

This sequence belongs to the gliadin/glutenin family. Post-translationally, substrate of transglutaminase.

In terms of biological role, gliadin is the major seed storage protein in wheat. The protein is Alpha/beta-gliadin clone PW1215 of Triticum aestivum (Wheat).